A 156-amino-acid polypeptide reads, in one-letter code: Transcription elongation factor GreA (156 aa).

Positions 46–66 form a coiled coil; the sequence is AEYHAAREKQSFVEGRIKELE.

The protein belongs to the GreA/GreB family.

Its function is as follows. Necessary for efficient RNA polymerase transcription elongation past template-encoded arresting sites. The arresting sites in DNA have the property of trapping a certain fraction of elongating RNA polymerases that pass through, resulting in locked ternary complexes. Cleavage of the nascent transcript by cleavage factors such as GreA or GreB allows the resumption of elongation from the new 3'terminus. GreA releases sequences of 2 to 3 nucleotides. In Paracoccus denitrificans (strain Pd 1222), this protein is Transcription elongation factor GreA.